The following is a 691-amino-acid chain: Calcium-binding and coiled-coil domain-containing protein 1 (691 aa).

Residues 1–30 (MEESSLSRAPSRGGVNFLNVARTYIPNTKV) are p300 KIX-binding. The N-terminal AD (CTNNB1 binding site) stretch occupies residues 1-190 (MEESSLSRAP…VQELEAALAT (190 aa)). Phosphoserine is present on S4. The interaction with GATA1 stretch occupies residues 45–125 (SDWIGIFKVE…FQFREPRPMD (81 aa)). Coiled coils occupy residues 145 to 205 (KATV…YKGL), 232 to 339 (ELED…AELE), and 417 to 514 (QSME…ADEK). Residues 501–691 (RKLEARLEKV…FSTQDPFTFE (191 aa)) are C-terminal AD (CTNNB1 binding site); interaction with CCAR1. Residues 512-605 (DEKWTEDAAT…DSEAEDEKSV (94 aa)) are disordered. Residues 653–679 (WKECPICKERFPAESDKDALEGHMDGH) form a UBZ1-type zinc finger. Zn(2+) is bound by residues C656, C659, H675, and H679.

It belongs to the CALCOCO family. Part of a calphoglin complex consisting of CALCOCO1, PPA1 and PGM. Interacts with the bHLH-PAS domains of GRIP1, AHR and ARNT. Interacts with CTNNB1 via both its N- and C-terminal regions. Interacts with EP300. Interacts with CCAR1 (via N-terminus) and GATA1. As to expression, expressed in all tissues examined except spleen, with high levels of expression in the heart and kidney.

It localises to the cytoplasm. Its subcellular location is the nucleus. Its function is as follows. Functions as a coactivator for aryl hydrocarbon and nuclear receptors (NR). Recruited to promoters through its contact with the N-terminal basic helix-loop-helix-Per-Arnt-Sim (PAS) domain of transcription factors or coactivators, such as NCOA2. During ER-activation acts synergistically in combination with other NCOA2-binding proteins, such as EP300, CREBBP and CARM1. Involved in the transcriptional activation of target genes in the Wnt/CTNNB1 pathway. Functions as a secondary coactivator in LEF1-mediated transcriptional activation via its interaction with CTNNB1. Coactivator function for nuclear receptors and LEF1/CTNNB1 involves differential utilization of two different activation regions. In association with CCAR1 enhances GATA1- and MED1-mediated transcriptional activation from the gamma-globin promoter during erythroid differentiation of K562 erythroleukemia cells. This Mus musculus (Mouse) protein is Calcium-binding and coiled-coil domain-containing protein 1 (Calcoco1).